The chain runs to 160 residues: Large ribosomal subunit protein uL30m (160 aa).

A mitochondrion-targeting transit peptide spans 1–34 (MAGVLRSAFPRPPCRLQTVKKGAESLIGTEWIRH). The disordered stretch occupies residues 44 to 64 (KVFQPKPEDHEKYGGDPQNPH).

Belongs to the universal ribosomal protein uL30 family. Component of the mitochondrial ribosome large subunit (39S) which comprises a 16S rRNA and about 50 distinct proteins.

It is found in the mitochondrion. This chain is Large ribosomal subunit protein uL30m (Mrpl30), found in Mus musculus (Mouse).